Here is a 95-residue protein sequence, read N- to C-terminus: Large ribosomal subunit protein uL23 (95 aa).

It belongs to the universal ribosomal protein uL23 family. Part of the 50S ribosomal subunit. Contacts protein L29, and trigger factor when it is bound to the ribosome.

Its function is as follows. One of the early assembly proteins it binds 23S rRNA. One of the proteins that surrounds the polypeptide exit tunnel on the outside of the ribosome. Forms the main docking site for trigger factor binding to the ribosome. In Desulfatibacillum aliphaticivorans, this protein is Large ribosomal subunit protein uL23.